A 39-amino-acid chain; its full sequence is Cytochrome b559 subunit beta (39 aa).

A helical membrane pass occupies residues 14-30 (WLAIHGLAVPTVFFLGS). His18 lines the heme pocket.

The protein belongs to the PsbE/PsbF family. In terms of assembly, heterodimer of an alpha subunit and a beta subunit. PSII is composed of 1 copy each of membrane proteins PsbA, PsbB, PsbC, PsbD, PsbE, PsbF, PsbH, PsbI, PsbJ, PsbK, PsbL, PsbM, PsbT, PsbX, PsbY, PsbZ, Psb30/Ycf12, at least 3 peripheral proteins of the oxygen-evolving complex and a large number of cofactors. It forms dimeric complexes. Requires heme b as cofactor.

The protein resides in the plastid. It is found in the chloroplast thylakoid membrane. This b-type cytochrome is tightly associated with the reaction center of photosystem II (PSII). PSII is a light-driven water:plastoquinone oxidoreductase that uses light energy to abstract electrons from H(2)O, generating O(2) and a proton gradient subsequently used for ATP formation. It consists of a core antenna complex that captures photons, and an electron transfer chain that converts photonic excitation into a charge separation. The protein is Cytochrome b559 subunit beta of Psilotum nudum (Whisk fern).